We begin with the raw amino-acid sequence, 84 residues long: uncharacterized protein (84 aa).

3 helical membrane-spanning segments follow: residues Ile8–Leu28, Ile30–Ile50, and Val63–Pro83.

The protein localises to the cell membrane. This is an uncharacterized protein from Methanocaldococcus jannaschii (strain ATCC 43067 / DSM 2661 / JAL-1 / JCM 10045 / NBRC 100440) (Methanococcus jannaschii).